The chain runs to 229 residues: Uracil-DNA glycosylase (229 aa).

Aspartate 70 functions as the Proton acceptor in the catalytic mechanism.

Belongs to the uracil-DNA glycosylase (UDG) superfamily. UNG family.

The protein localises to the cytoplasm. The enzyme catalyses Hydrolyzes single-stranded DNA or mismatched double-stranded DNA and polynucleotides, releasing free uracil.. Its function is as follows. Excises uracil residues from the DNA which can arise as a result of misincorporation of dUMP residues by DNA polymerase or due to deamination of cytosine. The polypeptide is Uracil-DNA glycosylase (Chlamydia trachomatis serovar L2b (strain UCH-1/proctitis)).